A 563-amino-acid polypeptide reads, in one-letter code: Autotransporter BimA (563 aa).

Positions 1–20 (MKYRRLSLAHARQDSGQAAS) are disordered. The signal sequence occupies residues 1–48 (MKYRRLSLAHARQDSGQAASNARSRRFARLLCSSIAPLALGFSADAFA). Positions 61 to 472 (APNDAHGNLL…NLAISNSNAY (412 aa)) are surface exposed passenger domain. A WH2 domain is found at 65-82 (AHGNLLDEIRRGVPLRHV). The tract at residues 96–130 (TLADAMRRVIDSRRTAFDSPPATPASPSPSWSDDE) is central and acidic domains. The tract at residues 109–350 (RTAFDSPPAT…PARPGGGQFT (242 aa)) is disordered. 3 stretches are compositionally biased toward low complexity: residues 138 to 150 (ATRPASRPESAAR), 162 to 197 (PASAESPSPRSPDASPSRTPSPTFSFPSPSRTSTPR), and 211 to 227 (SPAASPRVASPRSAHSR). Polar residues-rich tracts occupy residues 228 to 238 (GSTQPPSNLST) and 269 to 281 (SRGSTQPPSNLST). Residues 473–509 (TNQRIGDLQQSITETARDAYSGVAAATALTMIPDVDR) are outer membrane translocation of the passenger domain. Beta stranded transmembrane passes span 510-519 (DKMLSIGVGG), 525-536 (HRAVALGGTARI), 543-549 (RAGVAMS), and 553-563 (NTVGVGMSWQW). The interval 510 to 563 (DKMLSIGVGGAVYKGHRAVALGGTARIGENLKVRAGVAMSAGGNTVGVGMSWQW) is translocator domain.

The protein belongs to the autotransporter-2 (AT-2) (TC 1.B.40) family. In terms of assembly, homotrimer. Interacts with host G-actin; the interaction is direct. Interacts (via central and acidic domains) with host ACTR2/ARP2 and ACTR3/ARP3.

It is found in the cell outer membrane. The protein resides in the cell surface. Its function is as follows. During host cell infection, required for actin-based intracellular motility. Mediates actin tail formation at one pole of the bacteria surface by recruiting host Arp2/3 (ACTR3/ARP3-ACTR2/ARP2) which leads to actin polymerization which provides the propulsive force for intracellular movement and intercellular dissemination of the bacterium. The sequence is that of Autotransporter BimA from Burkholderia thailandensis (strain ATCC 700388 / DSM 13276 / CCUG 48851 / CIP 106301 / E264).